Reading from the N-terminus, the 397-residue chain is Beta sliding clamp (397 aa).

Belongs to the beta sliding clamp family. Forms a ring-shaped head-to-tail homodimer around DNA which binds and tethers DNA polymerases and other proteins to the DNA. The DNA replisome complex has a single clamp-loading complex (3 tau and 1 each of delta, delta', psi and chi subunits) which binds 3 Pol III cores (1 core on the leading strand and 2 on the lagging strand) each with a beta sliding clamp dimer. Additional proteins in the replisome are other copies of gamma, psi and chi, Ssb, DNA helicase and RNA primase.

It localises to the cytoplasm. Its function is as follows. Confers DNA tethering and processivity to DNA polymerases and other proteins. Acts as a clamp, forming a ring around DNA (a reaction catalyzed by the clamp-loading complex) which diffuses in an ATP-independent manner freely and bidirectionally along dsDNA. Initially characterized for its ability to contact the catalytic subunit of DNA polymerase III (Pol III), a complex, multichain enzyme responsible for most of the replicative synthesis in bacteria; Pol III exhibits 3'-5' exonuclease proofreading activity. The beta chain is required for initiation of replication as well as for processivity of DNA replication. This Mycolicibacterium smegmatis (strain ATCC 700084 / mc(2)155) (Mycobacterium smegmatis) protein is Beta sliding clamp (dnaN).